Here is a 158-residue protein sequence, read N- to C-terminus: Transcription elongation factor GreA (158 aa).

Residues V14–N76 are a coiled coil.

It belongs to the GreA/GreB family.

In terms of biological role, necessary for efficient RNA polymerase transcription elongation past template-encoded arresting sites. The arresting sites in DNA have the property of trapping a certain fraction of elongating RNA polymerases that pass through, resulting in locked ternary complexes. Cleavage of the nascent transcript by cleavage factors such as GreA or GreB allows the resumption of elongation from the new 3'terminus. GreA releases sequences of 2 to 3 nucleotides. This chain is Transcription elongation factor GreA, found in Clostridium acetobutylicum (strain ATCC 824 / DSM 792 / JCM 1419 / IAM 19013 / LMG 5710 / NBRC 13948 / NRRL B-527 / VKM B-1787 / 2291 / W).